The sequence spans 395 residues: Phosphoglycerate kinase (395 aa).

Substrate contacts are provided by residues 21–23, Arg-36, 59–62, Arg-113, and Arg-146; these read DLN and HLGR. ATP contacts are provided by residues Lys-197, Glu-324, and 350–353; that span reads GGDT.

This sequence belongs to the phosphoglycerate kinase family. Monomer.

It is found in the cytoplasm. It carries out the reaction (2R)-3-phosphoglycerate + ATP = (2R)-3-phospho-glyceroyl phosphate + ADP. Its pathway is carbohydrate degradation; glycolysis; pyruvate from D-glyceraldehyde 3-phosphate: step 2/5. The polypeptide is Phosphoglycerate kinase (Acinetobacter baylyi (strain ATCC 33305 / BD413 / ADP1)).